A 127-amino-acid chain; its full sequence is Small ribosomal subunit protein uS12 (127 aa).

A disordered region spans residues 1 to 28 (MPTIQQLIRDERSKAKRKTKSPALKQCP). Asp-89 is modified (3-methylthioaspartic acid). Positions 104 to 127 (ATGVKNRQKARSKYGTKRPKPAAK) are disordered. Positions 109-127 (NRQKARSKYGTKRPKPAAK) are enriched in basic residues.

Belongs to the universal ribosomal protein uS12 family. In terms of assembly, part of the 30S ribosomal subunit. Contacts proteins S8 and S17. May interact with IF1 in the 30S initiation complex.

With S4 and S5 plays an important role in translational accuracy. In terms of biological role, interacts with and stabilizes bases of the 16S rRNA that are involved in tRNA selection in the A site and with the mRNA backbone. Located at the interface of the 30S and 50S subunits, it traverses the body of the 30S subunit contacting proteins on the other side and probably holding the rRNA structure together. The combined cluster of proteins S8, S12 and S17 appears to hold together the shoulder and platform of the 30S subunit. In Microcystis aeruginosa (strain NIES-843 / IAM M-2473), this protein is Small ribosomal subunit protein uS12.